The primary structure comprises 468 residues: ATP synthase subunit beta (468 aa).

155 to 162 (GGAGVGKT) contacts ATP.

This sequence belongs to the ATPase alpha/beta chains family. As to quaternary structure, F-type ATPases have 2 components, CF(1) - the catalytic core - and CF(0) - the membrane proton channel. CF(1) has five subunits: alpha(3), beta(3), gamma(1), delta(1), epsilon(1). CF(0) has three main subunits: a(1), b(2) and c(9-12). The alpha and beta chains form an alternating ring which encloses part of the gamma chain. CF(1) is attached to CF(0) by a central stalk formed by the gamma and epsilon chains, while a peripheral stalk is formed by the delta and b chains.

It is found in the cell inner membrane. The enzyme catalyses ATP + H2O + 4 H(+)(in) = ADP + phosphate + 5 H(+)(out). Functionally, produces ATP from ADP in the presence of a proton gradient across the membrane. The catalytic sites are hosted primarily by the beta subunits. This chain is ATP synthase subunit beta, found in Thermotoga neapolitana (strain ATCC 49049 / DSM 4359 / NBRC 107923 / NS-E).